The sequence spans 220 residues: Iron-sulfur cluster repair protein YtfE (220 aa).

The protein belongs to the RIC family. YtfE subfamily. Homodimer.

Its subcellular location is the cytoplasm. Its function is as follows. Di-iron-containing protein involved in the repair of iron-sulfur clusters damaged by oxidative and nitrosative stress conditions. In Salmonella typhimurium (strain LT2 / SGSC1412 / ATCC 700720), this protein is Iron-sulfur cluster repair protein YtfE.